The chain runs to 206 residues: Recombination protein RecR (206 aa).

A C4-type zinc finger spans residues 58-73 (CNICGYITEKNICNFC). Residues 81–178 (STIMIVADNR…KITKLAYGIP (98 aa)) form the Toprim domain.

It belongs to the RecR family.

Functionally, may play a role in DNA repair. It seems to be involved in an RecBC-independent recombinational process of DNA repair. It may act with RecF and RecO. This chain is Recombination protein RecR, found in Phytoplasma mali (strain AT).